We begin with the raw amino-acid sequence, 217 residues long: Adenylate kinase (217 aa).

G11–T16 serves as a coordination point for ATP. Residues S31 to V60 are NMP. Residues T32, R37, D58 to V60, G86 to R89, and Q93 contribute to the AMP site. An LID region spans residues A127–D165. R128 is a binding site for ATP. Zn(2+) contacts are provided by C131 and C134. T137–Y138 contributes to the ATP binding site. Zn(2+) is bound by residues C151 and C154. AMP contacts are provided by R162 and R173. An ATP-binding site is contributed by Q201.

It belongs to the adenylate kinase family. As to quaternary structure, monomer.

It is found in the cytoplasm. The enzyme catalyses AMP + ATP = 2 ADP. It functions in the pathway purine metabolism; AMP biosynthesis via salvage pathway; AMP from ADP: step 1/1. Functionally, catalyzes the reversible transfer of the terminal phosphate group between ATP and AMP. Plays an important role in cellular energy homeostasis and in adenine nucleotide metabolism. This is Adenylate kinase from Lactobacillus delbrueckii subsp. bulgaricus (strain ATCC 11842 / DSM 20081 / BCRC 10696 / JCM 1002 / NBRC 13953 / NCIMB 11778 / NCTC 12712 / WDCM 00102 / Lb 14).